A 502-amino-acid polypeptide reads, in one-letter code: 2,3-bisphosphoglycerate-independent phosphoglycerate mutase (502 aa).

2 residues coordinate Mn(2+): aspartate 13 and serine 63. Residue serine 63 is the Phosphoserine intermediate of the active site. Residues histidine 117, 146-147 (RD), arginine 177, arginine 183, 251-254 (RSDR), and lysine 324 contribute to the substrate site. Mn(2+) contacts are provided by aspartate 389, histidine 393, aspartate 430, histidine 431, and histidine 448.

This sequence belongs to the BPG-independent phosphoglycerate mutase family. Monomer. Mn(2+) serves as cofactor.

It carries out the reaction (2R)-2-phosphoglycerate = (2R)-3-phosphoglycerate. It functions in the pathway carbohydrate degradation; glycolysis; pyruvate from D-glyceraldehyde 3-phosphate: step 3/5. Its function is as follows. Catalyzes the interconversion of 2-phosphoglycerate and 3-phosphoglycerate. This chain is 2,3-bisphosphoglycerate-independent phosphoglycerate mutase, found in Ureaplasma urealyticum serovar 10 (strain ATCC 33699 / Western).